The chain runs to 353 residues: Suppressor of RNA-mediated gene silencing (353 aa).

This sequence belongs to the phytoreovirus non-structural protein 10 family.

Functionally, suppressor of RNA-mediated gene silencing, also known as post-transcriptional gene silencing (PTGS), a mechanism of plant viral defense that limits the accumulation of viral RNAs. This is Suppressor of RNA-mediated gene silencing from Alopecurus aequalis (Barnyard grass).